Reading from the N-terminus, the 133-residue chain is ATP synthase epsilon chain (133 aa).

It belongs to the ATPase epsilon chain family. F-type ATPases have 2 components, CF(1) - the catalytic core - and CF(0) - the membrane proton channel. CF(1) has five subunits: alpha(3), beta(3), gamma(1), delta(1), epsilon(1). CF(0) has three main subunits: a, b and c.

It is found in the cell membrane. Functionally, produces ATP from ADP in the presence of a proton gradient across the membrane. The chain is ATP synthase epsilon chain from Staphylococcus haemolyticus (strain JCSC1435).